A 393-amino-acid chain; its full sequence is Tryptophan synthase beta chain (393 aa).

Residue Lys-85 is modified to N6-(pyridoxal phosphate)lysine.

The protein belongs to the TrpB family. In terms of assembly, tetramer of two alpha and two beta chains. It depends on pyridoxal 5'-phosphate as a cofactor.

The catalysed reaction is (1S,2R)-1-C-(indol-3-yl)glycerol 3-phosphate + L-serine = D-glyceraldehyde 3-phosphate + L-tryptophan + H2O. The protein operates within amino-acid biosynthesis; L-tryptophan biosynthesis; L-tryptophan from chorismate: step 5/5. Functionally, the beta subunit is responsible for the synthesis of L-tryptophan from indole and L-serine. The protein is Tryptophan synthase beta chain (trpB) of Helicobacter pylori (strain ATCC 700392 / 26695) (Campylobacter pylori).